The chain runs to 438 residues: tRNA modification GTPase MnmE (438 aa).

Positions 20, 78, and 117 each coordinate (6S)-5-formyl-5,6,7,8-tetrahydrofolate. In terms of domain architecture, TrmE-type G spans 214–359 (GIRVLIIGKP…LIDEIKKLFY (146 aa)). N224 serves as a coordination point for K(+). GTP is bound by residues 224–229 (NVGKST), 243–249 (TDIPGTT), and 268–271 (DTAG). S228 is a Mg(2+) binding site. K(+)-binding residues include T243, I245, and T248. T249 is a Mg(2+) binding site. K438 is a (6S)-5-formyl-5,6,7,8-tetrahydrofolate binding site.

The protein belongs to the TRAFAC class TrmE-Era-EngA-EngB-Septin-like GTPase superfamily. TrmE GTPase family. As to quaternary structure, homodimer. Heterotetramer of two MnmE and two MnmG subunits. Requires K(+) as cofactor.

It localises to the cytoplasm. Its function is as follows. Exhibits a very high intrinsic GTPase hydrolysis rate. Involved in the addition of a carboxymethylaminomethyl (cmnm) group at the wobble position (U34) of certain tRNAs, forming tRNA-cmnm(5)s(2)U34. The chain is tRNA modification GTPase MnmE from Ureaplasma parvum serovar 3 (strain ATCC 27815 / 27 / NCTC 11736).